The chain runs to 700 residues: Protein claret segregational (700 aa).

Phosphoserine occurs at positions 94 and 96. Residues 141–185 (APSSITATAVKRPPVTRPAPRAAGGAAAKKPAGTGAAASSGAAAA) are disordered. Positions 149–185 (AVKRPPVTRPAPRAAGGAAAKKPAGTGAAASSGAAAA) are enriched in low complexity. A coiled-coil region spans residues 196 to 346 (KARFHDLLEK…ELHNTVMDLR (151 aa)). In terms of domain architecture, Kinesin motor spans 348-670 (NIRVFCRIRP…LRFAASVNSC (323 aa)). Residue 434 to 441 (GQTGSGKT) coordinates ATP. A required for minus-end directionality region spans residues 664–668 (AASVN). The tract at residues 681-700 (LNNSVANSSTQSNNSGSFDK) is disordered.

It belongs to the TRAFAC class myosin-kinesin ATPase superfamily. Kinesin family. NCD subfamily.

The protein resides in the cytoplasm. It localises to the cytoskeleton. It carries out the reaction ATP + H2O = ADP + phosphate + H(+). Its function is as follows. Minus-end-directed microtubule-based motor protein. Has ATPase activity. Required for normal chromosomal segregation in meiosis in females, and in early mitotic divisions of the embryo. The chain is Protein claret segregational (ncd) from Drosophila melanogaster (Fruit fly).